Here is a 65-residue protein sequence, read N- to C-terminus: Putative potassium channel toxin Ts21 (65 aa).

An N-terminal signal peptide occupies residues 1 to 25 (MNKVYLVAILVLSVLLVANVSPIEG). 3 disulfides stabilise this stretch: Cys-31–Cys-53, Cys-38–Cys-61, and Cys-42–Cys-63.

It belongs to the short scorpion toxin superfamily. Potassium channel inhibitor family. Alpha-KTx 11 subfamily. In terms of tissue distribution, expressed by the venom gland.

It is found in the secreted. Its function is as follows. This recombinant toxin inhibits the mammalian voltage-gated potassium channels Kv1.3/KCNA3 in vitro with an IC(50) of 26.40 nM. The chain is Putative potassium channel toxin Ts21 from Tityus serrulatus (Brazilian scorpion).